Consider the following 184-residue polypeptide: Photosystem I assembly protein Ycf4 (184 aa).

The next 2 membrane-spanning stretches (helical) occupy residues 22–42 (FCWACILFLGSIGFLLVGISS) and 57–77 (ILFFPQGIVMCFYGIAGLFIS).

This sequence belongs to the Ycf4 family.

Its subcellular location is the plastid. It is found in the chloroplast thylakoid membrane. Its function is as follows. Seems to be required for the assembly of the photosystem I complex. The polypeptide is Photosystem I assembly protein Ycf4 (Illicium oligandrum (Star anise)).